The chain runs to 507 residues: Extracellular elastase (507 aa).

Residues 1–28 form the signal peptide; sequence MKNFSKFALTSIAALTVASPLVNTEVDA. The propeptide occupies 29-207; sequence KDKVSATQNI…VVDKLNMIKE (179 aa). Ca(2+) is bound at residue D347. H351 is a Zn(2+) binding site. E352 is a catalytic residue. Residues H355 and E375 each contribute to the Zn(2+) site. Residues D386, E388, D389, L391, E394, Y397, T398, V401, and D404 each contribute to the Ca(2+) site. H435 (proton donor) is an active-site residue.

Belongs to the peptidase M4 family. The cofactor is Ca(2+). Zn(2+) is required as a cofactor.

The protein localises to the secreted. Functionally, protease that has a low substrate specificity. Glucagon is preferentially cleaved between aromatic (Phe) and hydrophobic (Val) amino acids. Hydrolyzes casein and elastin. The sequence is that of Extracellular elastase (sepA) from Staphylococcus epidermidis.